The following is a 558-amino-acid chain: Ribonuclease J (558 aa).

Zn(2+) is bound by residues histidine 81, histidine 83, aspartate 85, histidine 86, histidine 148, and aspartate 170. 371–375 lines the substrate pocket; the sequence is HVSGH. Position 397 (histidine 397) interacts with Zn(2+).

The protein belongs to the metallo-beta-lactamase superfamily. RNA-metabolizing metallo-beta-lactamase-like family. Bacterial RNase J subfamily. As to quaternary structure, homodimer, may be a subunit of the RNA degradosome. Zn(2+) is required as a cofactor.

The protein resides in the cytoplasm. In terms of biological role, an RNase that has 5'-3' exonuclease and possibly endoonuclease activity. Involved in maturation of rRNA and in some organisms also mRNA maturation and/or decay. This chain is Ribonuclease J, found in Mycobacterium tuberculosis (strain CDC 1551 / Oshkosh).